The chain runs to 367 residues: Peptide chain release factor 2 (367 aa).

Gln-254 carries the N5-methylglutamine modification.

Belongs to the prokaryotic/mitochondrial release factor family. Methylated by PrmC. Methylation increases the termination efficiency of RF2.

It localises to the cytoplasm. Its function is as follows. Peptide chain release factor 2 directs the termination of translation in response to the peptide chain termination codons UGA and UAA. This is Peptide chain release factor 2 from Neisseria meningitidis serogroup C / serotype 2a (strain ATCC 700532 / DSM 15464 / FAM18).